Consider the following 383-residue polypeptide: Putative protein FAM157A (383 aa).

Disordered regions lie at residues 1 to 21 (MGPL…PLPK) and 177 to 254 (ATAR…PLGR).

Belongs to the FAM157 family.

This Homo sapiens (Human) protein is Putative protein FAM157A (FAM157A).